Reading from the N-terminus, the 987-residue chain is Eukaryotic translation initiation factor 3 subunit A (987 aa).

Residues 93–122 are a coiled coil; sequence LHLATDKAEQARSQADALEEALDVDDLEAD. Positions 316–513 constitute a PCI domain; that stretch reads LQLIASSVVL…GVVIFGNLGI (198 aa). 2 coiled-coil regions span residues 556–742 and 797–858; these read TVEK…EKNR and LKIE…REEL. Positions 808–859 are enriched in basic and acidic residues; sequence QEEEEARKQEEAERLKKVEAERKANLDKAFEKQRQREIELEEKSRREREELL. Positions 808-987 are disordered; it reads QEEEEARKQE…GSSRPRPTQR (180 aa). Residues 872-894 are compositionally biased toward low complexity; it reads PTVTPVGTTAPAAAAAAAGAPAA. Composition is skewed to polar residues over residues 905–916 and 976–987; these read TEVSGPSAPTSS and TFGSSRPRPTQR.

Belongs to the eIF-3 subunit A family. In terms of assembly, component of the eukaryotic translation initiation factor 3 (eIF-3) complex. Binds to the translation initiation factor TIF3H1.

It localises to the cytoplasm. RNA-binding component of the eukaryotic translation initiation factor 3 (eIF-3) complex, which is involved in protein synthesis of a specialized repertoire of mRNAs and, together with other initiation factors, stimulates binding of mRNA and methionyl-tRNAi to the 40S ribosome. The eIF-3 complex specifically targets and initiates translation of a subset of mRNAs involved in cell proliferation. This is Eukaryotic translation initiation factor 3 subunit A (TIF3A1) from Arabidopsis thaliana (Mouse-ear cress).